Here is a 515-residue protein sequence, read N- to C-terminus: Envelope glycoprotein (515 aa).

The signal sequence occupies residues 1 to 33 (MPKKRRSRRRPQPIIRWVSLTLTLLALCRPIQT). The Extracellular portion of the chain corresponds to 34–435 (WRCSLSLGNQ…LGLTAWVRET (402 aa)). N-linked (GlcNAc...) asparagine; by host glycans are attached at residues asparagine 129 and asparagine 203. Residues 212–215 (CAIC) carry the CXXC motif. 3 disulfides stabilise this stretch: cysteine 212–cysteine 215, cysteine 212–cysteine 392, and cysteine 384–cysteine 391. N-linked (GlcNAc...) asparagine; by host glycans are attached at residues asparagine 230, asparagine 251, asparagine 256, asparagine 271, and asparagine 287. Positions 304 to 324 (VAALTLGLALSVGLTGINVAV) are fusion peptide. 2 coiled-coil regions span residues 330-376 (QRLT…WLYI) and 388-420 (NEPC…DWQW). Asparagine 351 is a glycosylation site (N-linked (GlcNAc...) asparagine; by host). The tract at residues 365–381 (AQNRRGLDWLYIRLGFQ) is immunosuppression. Positions 384-392 (CPTINEPCC) match the CX6CC motif. A glycan (N-linked (GlcNAc...) asparagine; by host) is linked at asparagine 398. A helical membrane pass occupies residues 436–456 (IHSVLSLFLLALFLLFLAPCL). A lipid anchor (S-palmitoyl cysteine; by host) is attached at cysteine 455. The Cytoplasmic portion of the chain corresponds to 457-515 (IKCLTSRLLKLLRQAPHFPEISLTPKPDSDYQALLPSAPEIYSHLSPVKPDYINLRPCP).

The mature envelope protein (Env) consists of a trimer of SU-TM heterodimers attached by a labile interchain disulfide bond. Specific enzymatic cleavages in vivo yield mature proteins. Envelope glycoproteins are synthesized as an inactive precursor that is N-glycosylated and processed likely by host cell furin or by a furin-like protease in the Golgi to yield the mature SU and TM proteins. The cleavage site between SU and TM requires the minimal sequence [KR]-X-[KR]-R. Post-translationally, the CXXC motif is highly conserved across a broad range of retroviral envelope proteins. It is thought to participate in the formation of a labile disulfide bond possibly with the CX6CC motif present in the transmembrane protein. Isomerization of the intersubunit disulfide bond to an SU intrachain disulfide bond is thought to occur upon receptor recognition in order to allow membrane fusion. In terms of processing, the transmembrane protein is palmitoylated.

The protein resides in the virion membrane. Its subcellular location is the host cell membrane. Its function is as follows. The surface protein (SU) attaches the virus to the host cell by binding to its receptor. This interaction triggers the refolding of the transmembrane protein (TM) and is thought to activate its fusogenic potential by unmasking its fusion peptide. Fusion occurs at the host cell plasma membrane. In terms of biological role, the transmembrane protein (TM) acts as a class I viral fusion protein. Under the current model, the protein has at least 3 conformational states: pre-fusion native state, pre-hairpin intermediate state, and post-fusion hairpin state. During viral and target cell membrane fusion, the coiled coil regions (heptad repeats) assume a trimer-of-hairpins structure, positioning the fusion peptide in close proximity to the C-terminal region of the ectodomain. The formation of this structure appears to drive apposition and subsequent fusion of viral and target cell membranes. Membranes fusion leads to delivery of the nucleocapsid into the cytoplasm. The chain is Envelope glycoprotein (env) from Bovine leukemia virus (isolate American FLK) (BLV).